The following is a 320-amino-acid chain: Cytochrome f (320 aa).

Residues 1-35 (MENRNTFSWVKEQITRSISVSIMIYVITRTSISNA) form the signal peptide. Heme-binding residues include tyrosine 36, cysteine 56, cysteine 59, and histidine 60. Residues 286–305 (VQGLLFFFASVILAQVFLVL) traverse the membrane as a helical segment.

It belongs to the cytochrome f family. As to quaternary structure, the 4 large subunits of the cytochrome b6-f complex are cytochrome b6, subunit IV (17 kDa polypeptide, petD), cytochrome f and the Rieske protein, while the 4 small subunits are PetG, PetL, PetM and PetN. The complex functions as a dimer. Heme is required as a cofactor.

Its subcellular location is the plastid. It localises to the chloroplast thylakoid membrane. In terms of biological role, component of the cytochrome b6-f complex, which mediates electron transfer between photosystem II (PSII) and photosystem I (PSI), cyclic electron flow around PSI, and state transitions. This is Cytochrome f (petA) from Triticum aestivum (Wheat).